Reading from the N-terminus, the 196-residue chain is MNEAVSPGALSTLFTDARTHNGWRETPVSDETLREIYALMKWGPTSANCSPARIVFTRTAEGKERLRPALSSGNLQKTLTAPVTAIVAWDSEFYERLPLLFPHGDARSWFTSSPQLAEETAFRNSSMQAAYLIVACRALGLDTGPMSGFDRQHVDDAFFTGSTLKSNLLINIGYGDSSKLYARLPRLSFEEACGLL.

The protein belongs to the nitroreductase family. HadB/RutE subfamily. The cofactor is FMN.

The catalysed reaction is 3-hydroxypropanoate + NADP(+) = 3-oxopropanoate + NADPH + H(+). Its function is as follows. May reduce toxic product malonic semialdehyde to 3-hydroxypropionic acid, which is excreted. This is Probable malonic semialdehyde reductase RutE from Escherichia coli (strain K12 / MC4100 / BW2952).